Reading from the N-terminus, the 239-residue chain is Large ribosomal subunit protein uL1 (239 aa).

Belongs to the universal ribosomal protein uL1 family. In terms of assembly, part of the 50S ribosomal subunit.

In terms of biological role, binds directly to 23S rRNA. The L1 stalk is quite mobile in the ribosome, and is involved in E site tRNA release. Functionally, protein L1 is also a translational repressor protein, it controls the translation of the L11 operon by binding to its mRNA. The polypeptide is Large ribosomal subunit protein uL1 (Acidothermus cellulolyticus (strain ATCC 43068 / DSM 8971 / 11B)).